A 546-amino-acid polypeptide reads, in one-letter code: Chaperonin GroEL 1 (546 aa).

ATP-binding positions include threonine 30–proline 33, lysine 51, aspartate 87–threonine 91, glycine 415, asparagine 479–alanine 481, and aspartate 495. The disordered stretch occupies residues lysine 526–methionine 546. The segment covering glycine 534–methionine 546 has biased composition (gly residues).

This sequence belongs to the chaperonin (HSP60) family. In terms of assembly, forms a cylinder of 14 subunits composed of two heptameric rings stacked back-to-back. Interacts with the co-chaperonin GroES.

The protein localises to the cytoplasm. It catalyses the reaction ATP + H2O + a folded polypeptide = ADP + phosphate + an unfolded polypeptide.. Together with its co-chaperonin GroES, plays an essential role in assisting protein folding. The GroEL-GroES system forms a nano-cage that allows encapsulation of the non-native substrate proteins and provides a physical environment optimized to promote and accelerate protein folding. The sequence is that of Chaperonin GroEL 1 from Burkholderia pseudomallei (strain K96243).